The chain runs to 211 residues: Adenylyl-sulfate kinase (211 aa).

Position 36-43 (36-43 (GLSGSGKS)) interacts with ATP. Serine 110 functions as the Phosphoserine intermediate in the catalytic mechanism.

The protein belongs to the APS kinase family.

The enzyme catalyses adenosine 5'-phosphosulfate + ATP = 3'-phosphoadenylyl sulfate + ADP + H(+). The protein operates within sulfur metabolism; hydrogen sulfide biosynthesis; sulfite from sulfate: step 2/3. In terms of biological role, catalyzes the synthesis of activated sulfate. The chain is Adenylyl-sulfate kinase (cysC) from Buchnera aphidicola subsp. Schizaphis graminum (strain Sg).